A 423-amino-acid polypeptide reads, in one-letter code: Polyglutamylase complex subunit TTLL1 (423 aa).

In terms of domain architecture, TTL spans 1–367 (MAGRVKWVTD…NGEIPDCKWN (367 aa)). ATP contacts are provided by residues lysine 138, 144–145 (QG), 181–184 (SVYI), and 194–196 (KFD). Glutamine 144 is an a protein binding site. Arginine 220 is an L-glutamate binding site. 241–242 (TN) provides a ligand contact to ATP. Lysine 259 contributes to the L-glutamate binding site. Positions 313, 326, and 328 each coordinate Mg(2+). L-glutamate is bound at residue lysine 344. The tract at residues 390–423 (DGAERELRNRPGQPVGPRAGRSRDSGRSVLTTWK) is disordered.

This sequence belongs to the tubulin polyglutamylase family. As to quaternary structure, part of the neuronal tubulin polyglutamylase complex which contains TPGS1, TPGS2, TTLL1, LRRC49 and NICN1. Interacts with PCM1, CSTPP1 and LRRC49. It depends on Mg(2+) as a cofactor. Highly expressed in brain, heart and kidney. Expressed in liver, lung, muscle, spleen, testis and trachea. In the brain, expressed in ependymal cilia, cortex, corpus callosum and striatum. Expressed in blastomere.

It localises to the cytoplasm. Its subcellular location is the cytoskeleton. It is found in the cilium basal body. The protein resides in the cilium axoneme. The protein localises to the cell projection. It localises to the cilium. Its subcellular location is the flagellum. It catalyses the reaction (L-glutamyl)(n)-gamma-L-glutamyl-L-glutamyl-[protein] + L-glutamate + ATP = (L-glutamyl)(n+1)-gamma-L-glutamyl-L-glutamyl-[protein] + ADP + phosphate + H(+). Its function is as follows. Catalytic subunit of a polyglutamylase complex which modifies tubulin, generating side chains of glutamate on the gamma-carboxyl group of specific glutamate residues within the C-terminal tail of tubulin. Probably involved in the side-chain elongation step of the polyglutamylation reaction rather than the initiation step. Modifies both alpha- and beta-tubulins with a preference for the alpha-tail. Unlike most polyglutamylases of the tubulin--tyrosine ligase family, only displays a catalytic activity when in complex with other proteins as it is most likely lacking domains important for autonomous activity. Part of the neuronal tubulin polyglutamylase complex. Mediates cilia and flagella polyglutamylation which is essential for their biogenesis and motility. Involved in respiratory motile cilia function through the regulation of beating asymmetry. Essential for sperm flagella biogenesis, motility and male fertility. Also mediates glutamylation of non-tubulin proteins. Involved in KLF4 glutamylation which impedes its ubiquitination, thereby leading to somatic cell reprogramming, pluripotency maintenance and embryogenesis. In Mus musculus (Mouse), this protein is Polyglutamylase complex subunit TTLL1.